The primary structure comprises 317 residues: Low affinity immunoglobulin gamma Fc region receptor II-a (317 aa).

The signal sequence occupies residues 1-33; the sequence is MTMETQMSQNVCPRNLWLLQPLTVLLLLASADS. Residues 34-217 are Extracellular-facing; the sequence is QAAAPPKAVL…PSMGSSSPMG (184 aa). 2 Ig-like C2-type domains span residues 39–118 and 122–204; these read PKAV…VHLT and EWLV…VTIT. 2 disulfides stabilise this stretch: cysteine 62-cysteine 104 and cysteine 143-cysteine 187. 2 N-linked (GlcNAc...) asparagine glycosylation sites follow: asparagine 97 and asparagine 178. A helical transmembrane segment spans residues 218 to 240; it reads IIVAVVIATAVAAIVAAVVALIY. Residues 241-317 are Cytoplasmic-facing; the sequence is CRKKRISANS…PPNDHVNSNN (77 aa). Phosphotyrosine; by SRC-type Tyr-kinases occurs at positions 288 and 304. The interval 292-317 is disordered; the sequence is NPRAPTDDDKNIYLTLPPNDHVNSNN.

In terms of assembly, interacts with IGHG1. Interacts with INPP5D/SHIP1 and INPPL1/SHIP2, regulating its function. Interacts with APCS and FGR. Interacts with HCK. In terms of processing, phosphorylated by SRC-type Tyr-kinases such as LYN, BLK, FYN, HCK and SYK. As to expression, found on monocytes, neutrophils and eosinophil platelets.

The protein localises to the cell membrane. Functionally, binds to the Fc region of immunoglobulins gamma. Low affinity receptor. By binding to IgG it initiates cellular responses against pathogens and soluble antigens. Promotes phagocytosis of opsonized antigens. In Homo sapiens (Human), this protein is Low affinity immunoglobulin gamma Fc region receptor II-a (FCGR2A).